Here is a 205-residue protein sequence, read N- to C-terminus: UPF0637 protein OB1420 (205 aa).

This sequence belongs to the UPF0637 family.

This chain is UPF0637 protein OB1420, found in Oceanobacillus iheyensis (strain DSM 14371 / CIP 107618 / JCM 11309 / KCTC 3954 / HTE831).